Here is a 116-residue protein sequence, read N- to C-terminus: Urease subunit beta (116 aa).

Positions 97-116 are disordered; the sequence is IQGPLDAGTAETAPGLPQQP.

This sequence belongs to the urease beta subunit family. Heterotrimer of UreA (gamma), UreB (beta) and UreC (alpha) subunits. Three heterotrimers associate to form the active enzyme.

Its subcellular location is the cytoplasm. It catalyses the reaction urea + 2 H2O + H(+) = hydrogencarbonate + 2 NH4(+). It participates in nitrogen metabolism; urea degradation; CO(2) and NH(3) from urea (urease route): step 1/1. This chain is Urease subunit beta, found in Paracidovorax citrulli (strain AAC00-1) (Acidovorax citrulli).